Consider the following 446-residue polypeptide: Tubulin beta chain (446 aa).

Positions 11, 69, 138, 142, 143, 144, 204, and 226 each coordinate GTP. Residue E69 participates in Mg(2+) binding. The disordered stretch occupies residues 426 to 446 (QDATAEEEGEYVEDEDEMDGM). Positions 429 to 446 (TAEEEGEYVEDEDEMDGM) are enriched in acidic residues.

It belongs to the tubulin family. As to quaternary structure, dimer of alpha and beta chains. A typical microtubule is a hollow water-filled tube with an outer diameter of 25 nm and an inner diameter of 15 nM. Alpha-beta heterodimers associate head-to-tail to form protofilaments running lengthwise along the microtubule wall with the beta-tubulin subunit facing the microtubule plus end conferring a structural polarity. Microtubules usually have 13 protofilaments but different protofilament numbers can be found in some organisms and specialized cells. The cofactor is Mg(2+).

It is found in the cytoplasm. The protein localises to the cytoskeleton. Tubulin is the major constituent of microtubules, a cylinder consisting of laterally associated linear protofilaments composed of alpha- and beta-tubulin heterodimers. Microtubules grow by the addition of GTP-tubulin dimers to the microtubule end, where a stabilizing cap forms. Below the cap, tubulin dimers are in GDP-bound state, owing to GTPase activity of alpha-tubulin. The polypeptide is Tubulin beta chain (Euplotes crassus).